The sequence spans 459 residues: MVKRYAVILAAGQGTRMKSKLYKVLHPVCGKPMVQHVVDQVSKLGVEKTIAVVGFGAEQVKEQLGAQCEYALQEKQLGTAHAVMQAAPHLQNLEGITIVVCGDTPLITAETMEALLEHHMTAGAKATVLTAIADDPTGYGRIVRNSDGHVEKIVEHKDANEQEREIREINTGTYCFDNRMLFQALTKVTNNNAQGEYYLTDVIEIIKADGGIVSAYQAPSFDETIGINDRIALAEAERIMRDRICRQHMKNGVTIIDPACTYISAEATIGRDTVIYPGTVIEGKTVIGEDCTIGPHSEIKNCHIGHRTSIRHSVAHDSEIGDDVTIGPFAHIRPLSKIDDEVRIGNFVEVKKSTFGKGSKASHLSYIGDAEVGADVNLGCGSITVNYDGVHKYRTKIEDGAFIGCNANLIAPVTIGQGAYVAAGSTVTDDVPGRALAIGRARQVNKENYVDRLRGKKKS.

The interval 1–230 (MVKRYAVILA…FDETIGINDR (230 aa)) is pyrophosphorylase. Residues 9-12 (LAAG), K23, Q73, and 78-79 (GT) each bind UDP-N-acetyl-alpha-D-glucosamine. D103 is a binding site for Mg(2+). UDP-N-acetyl-alpha-D-glucosamine-binding residues include G140, E155, N170, and N228. N228 lines the Mg(2+) pocket. Positions 231-251 (IALAEAERIMRDRICRQHMKN) are linker. Positions 252–459 (GVTIIDPACT…VDRLRGKKKS (208 aa)) are N-acetyltransferase. Residues R333 and K351 each coordinate UDP-N-acetyl-alpha-D-glucosamine. The active-site Proton acceptor is H363. UDP-N-acetyl-alpha-D-glucosamine-binding residues include Y366 and N377. Acetyl-CoA contacts are provided by residues 386 to 387 (NY), A423, and R440.

This sequence in the N-terminal section; belongs to the N-acetylglucosamine-1-phosphate uridyltransferase family. The protein in the C-terminal section; belongs to the transferase hexapeptide repeat family. As to quaternary structure, homotrimer. The cofactor is Mg(2+).

Its subcellular location is the cytoplasm. It carries out the reaction alpha-D-glucosamine 1-phosphate + acetyl-CoA = N-acetyl-alpha-D-glucosamine 1-phosphate + CoA + H(+). The catalysed reaction is N-acetyl-alpha-D-glucosamine 1-phosphate + UTP + H(+) = UDP-N-acetyl-alpha-D-glucosamine + diphosphate. It participates in nucleotide-sugar biosynthesis; UDP-N-acetyl-alpha-D-glucosamine biosynthesis; N-acetyl-alpha-D-glucosamine 1-phosphate from alpha-D-glucosamine 6-phosphate (route II): step 2/2. The protein operates within nucleotide-sugar biosynthesis; UDP-N-acetyl-alpha-D-glucosamine biosynthesis; UDP-N-acetyl-alpha-D-glucosamine from N-acetyl-alpha-D-glucosamine 1-phosphate: step 1/1. Its pathway is bacterial outer membrane biogenesis; LPS lipid A biosynthesis. Its function is as follows. Catalyzes the last two sequential reactions in the de novo biosynthetic pathway for UDP-N-acetylglucosamine (UDP-GlcNAc). The C-terminal domain catalyzes the transfer of acetyl group from acetyl coenzyme A to glucosamine-1-phosphate (GlcN-1-P) to produce N-acetylglucosamine-1-phosphate (GlcNAc-1-P), which is converted into UDP-GlcNAc by the transfer of uridine 5-monophosphate (from uridine 5-triphosphate), a reaction catalyzed by the N-terminal domain. This chain is Bifunctional protein GlmU, found in Geobacillus thermodenitrificans (strain NG80-2).